The sequence spans 510 residues: Polyamine aminopropyltransferase 2 (510 aa).

The next 6 membrane-spanning stretches (helical) occupy residues 6–26 (ALLV…ELIA), 38–58 (ILQF…GSWV), 74–94 (LELL…LLFA), 102–122 (LVLY…IPLV), 140–160 (VLTF…LVLA), and 165–185 (LVRT…WTLW). Residues 205–449 (AGMVGAALLA…GEWGFILAAP (245 aa)) enclose the PABS domain. Positions 207 to 456 (MVGAALLAGF…AAPGRADFRP (250 aa)) are spermidine synthase. Residue glutamine 244 participates in S-methyl-5'-thioadenosine binding. Histidine 274 and aspartate 298 together coordinate spermidine. S-methyl-5'-thioadenosine-binding positions include aspartate 318 and 352–353 (DA). Aspartate 370 (proton acceptor) is an active-site residue.

The protein belongs to the spermidine/spermine synthase family. Homodimer or homotetramer.

Its subcellular location is the cell membrane. The enzyme catalyses S-adenosyl 3-(methylsulfanyl)propylamine + putrescine = S-methyl-5'-thioadenosine + spermidine + H(+). It participates in amine and polyamine biosynthesis; spermidine biosynthesis; spermidine from putrescine: step 1/1. In terms of biological role, catalyzes the irreversible transfer of a propylamine group from the amino donor S-adenosylmethioninamine (decarboxy-AdoMet) to putrescine (1,4-diaminobutane) to yield spermidine. This chain is Polyamine aminopropyltransferase 2, found in Ralstonia nicotianae (strain ATCC BAA-1114 / GMI1000) (Ralstonia solanacearum).